We begin with the raw amino-acid sequence, 36 residues long: Photosystem I reaction center subunit VIII (36 aa).

A helical transmembrane segment spans residues 6-26 (LPSIFVPLVGLVFPAIAMASL).

It belongs to the PsaI family.

It localises to the plastid. Its subcellular location is the chloroplast thylakoid membrane. Functionally, may help in the organization of the PsaL subunit. The chain is Photosystem I reaction center subunit VIII from Drimys granadensis.